The primary structure comprises 282 residues: MTHWPSPAKLNLFLYITGQRADGYHTLQTLFQFLDYGDTLHIEPRHDGEIHLLTPVNGVENEDNLIVRAARLLMKVASESGRLPTGSGADISIEKRLPMGGGLGGGSSNAATVLVALNHLWQCGLSVDELAAIGLTLGADVPVFVRGHAAFAEGVGEILTPVNPPEKWYLVAHPGVSIPTPVIFKDPQLPRNTPKRSIDTLLKCEFSNDCEVIARKRFREVDAALSWLLEYAPSRLTGTGACVFAEFDTESCARQVLEQAPEWLNAFVAKGVNLSPLHRELL.

Lys-9 is a catalytic residue. 98–108 (PMGGGLGGGSS) serves as a coordination point for ATP. The active site involves Asp-140.

The protein belongs to the GHMP kinase family. IspE subfamily. Homodimer.

It carries out the reaction 4-CDP-2-C-methyl-D-erythritol + ATP = 4-CDP-2-C-methyl-D-erythritol 2-phosphate + ADP + H(+). It participates in isoprenoid biosynthesis; isopentenyl diphosphate biosynthesis via DXP pathway; isopentenyl diphosphate from 1-deoxy-D-xylulose 5-phosphate: step 3/6. In terms of biological role, catalyzes the phosphorylation of the position 2 hydroxy group of 4-diphosphocytidyl-2C-methyl-D-erythritol. In Salmonella paratyphi B (strain ATCC BAA-1250 / SPB7), this protein is 4-diphosphocytidyl-2-C-methyl-D-erythritol kinase.